Consider the following 499-residue polypeptide: Dual specificity protein kinase CLK2 (499 aa).

Residues 1–65 (MPHPRRYHSS…RSSYDDHSSD (65 aa)) are disordered. Basic and acidic residues predominate over residues 8-23 (HSSERGSRGSYHEHYQ). Residues 24–33 (SRKHKRRRSR) are compositionally biased toward basic residues. A Phosphoserine; by PKB/AKT1 modification is found at serine 34. Positions 47–65 (REDSYHVRSRSSYDDHSSD) are enriched in basic and acidic residues. Serine 98 is subject to Phosphoserine; by autocatalysis. Residue tyrosine 99 is modified to Phosphotyrosine; by autocatalysis. The interval 102–142 (HRENSSYRSQRSSRRKHRRRRRRSRTFSRSSSHSSRRAKSV) is disordered. A compositionally biased stretch (basic residues) spans 112-127 (RSSRRKHRRRRRRSRT). Phosphothreonine; by PKB/AKT1 is present on threonine 127. Serine 141 carries the post-translational modification Phosphoserine; by autocatalysis. Tyrosine 152 bears the Phosphotyrosine mark. The region spanning 163 to 479 (EIVSTLGEGT…GEALQHPFFA (317 aa)) is the Protein kinase domain. ATP is bound by residues 168 to 176 (LGEGTFGRV) and lysine 192. Residue aspartate 289 is the Proton acceptor of the active site. Threonine 343 carries the post-translational modification Phosphothreonine; by PKB/AKT2.

It belongs to the protein kinase superfamily. CMGC Ser/Thr protein kinase family. Lammer subfamily. As to quaternary structure, interacts with RBMX and UBL5. Interacts with AKT1. In terms of processing, autophosphorylates on all three types of residues. Phosphorylation on Ser-34 and Thr-127 by AKT1 is induced by ionizing radiation or insulin. Phosphorylation plays a critical role in cell proliferation following low dose radiation and prevents cell death following high dose radiation. Phosphorylation at Thr-343 by PKB/AKT2 induces its kinase activity which is required for its stability. The phosphorylation status at Ser-141 influences its subnuclear localization; inhibition of phosphorylation at Ser-141 results in accumulation in the nuclear speckle.

Its subcellular location is the nucleus. The protein resides in the nucleus speckle. It catalyses the reaction L-seryl-[protein] + ATP = O-phospho-L-seryl-[protein] + ADP + H(+). It carries out the reaction L-threonyl-[protein] + ATP = O-phospho-L-threonyl-[protein] + ADP + H(+). The catalysed reaction is L-tyrosyl-[protein] + ATP = O-phospho-L-tyrosyl-[protein] + ADP + H(+). 5,6-dichloro-1-b-D-ribofuranosylbenzimidazole (DRB) inhibits autophosphorylation. TG003 inhibits its kinase activity and affects the regulation of alternative splicing mediated by phosphorylation of SR proteins. Its function is as follows. Dual specificity kinase acting on both serine/threonine and tyrosine-containing substrates. Phosphorylates serine- and arginine-rich (SR) proteins of the spliceosomal complex. May be a constituent of a network of regulatory mechanisms that enable SR proteins to control RNA splicing and can cause redistribution of SR proteins from speckles to a diffuse nucleoplasmic distribution. Acts as a suppressor of hepatic gluconeogenesis and glucose output by repressing PPARGC1A transcriptional activity on gluconeogenic genes via its phosphorylation. Phosphorylates PPP2R5B thereby stimulating the assembly of PP2A phosphatase with the PPP2R5B-AKT1 complex leading to dephosphorylation of AKT1. Phosphorylates: PTPN1, SRSF1 and SRSF3. Regulates the alternative splicing of tissue factor (F3) pre-mRNA in endothelial cells. Phosphorylates PAGE4 at several serine and threonine residues and this phosphorylation attenuates the ability of PAGE4 to potentiate the transcriptional activator activity of JUN. This Mus musculus (Mouse) protein is Dual specificity protein kinase CLK2 (Clk2).